A 379-amino-acid polypeptide reads, in one-letter code: Probable peptidoglycan glycosyltransferase FtsW (379 aa).

Over 1–15 the chain is Cytoplasmic; that stretch reads MHKTEAQTYLLYDRT. The chain crosses the membrane as a helical span at residues 16–36; sequence LLLLTMGLVGIGLVMVISTSM. Residues 37–52 lie on the Periplasmic side of the membrane; the sequence is PIGVRLSEDPFYFARR. The helical transmembrane segment at 53–73 threads the bilayer; it reads YAFYLGLAVVLSLVTLGIPMA. Topologically, residues 74 to 79 are cytoplasmic; sequence SWQRGS. A helical membrane pass occupies residues 80 to 100; it reads SLILLITLIMLLLVLIAGQSV. Over 101–113 the chain is Periplasmic; the sequence is NGAVRWLALGPWR. The chain crosses the membrane as a helical span at residues 114–133; the sequence is IQPAELSKLALFCYLASYLV. At 134-139 the chain is on the cytoplasmic side; it reads RKAEEV. Residues 140–162 form a helical membrane-spanning segment; it reads RTNFWGFCKPIGVMVLLAILLLA. Over 163–165 the chain is Periplasmic; that stretch reads QPD. The chain crosses the membrane as a helical span at residues 166–183; it reads LGTVLVLFITTLAMLFLA. Residues 184 to 186 lie on the Cytoplasmic side of the membrane; sequence EAK. The helical transmembrane segment at 187–207 threads the bilayer; that stretch reads IWQFLPIIGTGILAVMLLIIA. Residues 208–269 lie on the Periplasmic side of the membrane; it reads KPYRRRRVTS…TEAHTDFICS (62 aa). A helical transmembrane segment spans residues 270–290; it reads ILGEELGYFGVLLALLMVFLV. The Cytoplasmic portion of the chain corresponds to 291–301; it reads AFRAMSIGRKA. A helical membrane pass occupies residues 302–322; sequence LAINQIFSGFLACSIGIWFSF. Topologically, residues 323 to 342 are periplasmic; the sequence is QTMVNVGAAAGMLPTKGLTL. A helical transmembrane segment spans residues 343–363; sequence PFISYGGSSMLIMLTAIVLLI. Over 364–379 the chain is Cytoplasmic; the sequence is RIDFETRLAKLQAFVR.

It belongs to the SEDS family. FtsW subfamily.

Its subcellular location is the cell inner membrane. It catalyses the reaction [GlcNAc-(1-&gt;4)-Mur2Ac(oyl-L-Ala-gamma-D-Glu-L-Lys-D-Ala-D-Ala)](n)-di-trans,octa-cis-undecaprenyl diphosphate + beta-D-GlcNAc-(1-&gt;4)-Mur2Ac(oyl-L-Ala-gamma-D-Glu-L-Lys-D-Ala-D-Ala)-di-trans,octa-cis-undecaprenyl diphosphate = [GlcNAc-(1-&gt;4)-Mur2Ac(oyl-L-Ala-gamma-D-Glu-L-Lys-D-Ala-D-Ala)](n+1)-di-trans,octa-cis-undecaprenyl diphosphate + di-trans,octa-cis-undecaprenyl diphosphate + H(+). It participates in cell wall biogenesis; peptidoglycan biosynthesis. Peptidoglycan polymerase that is essential for cell division. The chain is Probable peptidoglycan glycosyltransferase FtsW from Moranella endobia (strain PCIT).